Consider the following 391-residue polypeptide: Ferrochelatase (391 aa).

Fe cation-binding residues include His196 and Glu281.

Belongs to the ferrochelatase family.

It localises to the cytoplasm. The catalysed reaction is heme b + 2 H(+) = protoporphyrin IX + Fe(2+). It functions in the pathway porphyrin-containing compound metabolism; protoheme biosynthesis; protoheme from protoporphyrin-IX: step 1/1. Catalyzes the ferrous insertion into protoporphyrin IX. The sequence is that of Ferrochelatase from Prochlorococcus marinus (strain SARG / CCMP1375 / SS120).